A 467-amino-acid polypeptide reads, in one-letter code: L-histidine transporter HutT (467 aa).

The next 13 helical transmembrane spans lie at F18–Q38, M39–M59, V71–L91, M99–P119, I125–F145, L155–F175, V200–I220, I245–I265, G280–I300, W334–I354, V358–L378, F402–G422, and A429–C449.

It belongs to the amino acid-polyamine-organocation (APC) superfamily. Amino acid transporter (AAT) (TC 2.A.3.1) family.

It localises to the cell inner membrane. It catalyses the reaction L-histidine(out) + n H(+)(out) = L-histidine(in) + n H(+)(in). Its activity is regulated as follows. Transport activity is inhibited by the proton ionophores carbonyl cyanide m-chlorophenyl hydrazine (CCCP) and 2,4-dinitrophenol (DNP), but not by valinomycin, nigericin and nonactin. Uptake is reduced in the presence of the sulfhydryl reagent N-ethylmaleimide (NEM). Uptake is not affected by arginine, lysine, proline or compounds structurally related to histidine such as imidazole, 3-amino-1,2,4-triazole and urocanate. Only 1,2,4-triazolyl-3-alanine reduces the rate of L-histidine uptake significantly. Major high-affinity histidine transporter. Binds and catalyzes the uptake of histidine into the cell. Functions as an histidine:proton symporter with high specificity for histidine. This is L-histidine transporter HutT from Pseudomonas putida (strain ATCC 47054 / DSM 6125 / CFBP 8728 / NCIMB 11950 / KT2440).